The primary structure comprises 430 residues: Dye-decolorizing peroxidase Tfu_3078 (430 aa).

The segment at residues 1–39 (MTEPDTERKGSSRRGFLAGLGAAALTGAGIGMAAGEVLR) is a signal peptide (tat-type signal). The disordered stretch occupies residues 42 to 75 (LPDSDPAASPEAEQRLRMAAQRADATAAPQPGIS). Over residues 60-69 (AAQRADATAA) the composition is skewed to low complexity. Asp242 acts as the Proton acceptor in catalysis. His338 is a binding site for heme.

It belongs to the DyP-type peroxidase family. As to quaternary structure, monomer. Heme b serves as cofactor. Post-translationally, exported by the Tat system. The position of the signal peptide cleavage has not been experimentally proven.

The protein resides in the secreted. It catalyses the reaction Reactive Blue 5 + 2 H2O2 = 2,2'-disulfonyl azobenzene + 3-[(4-amino-6-chloro-1,3,5-triazin-2-yl)amino]benzenesulfonate + phthalate + 2 H2O + 2 H(+). Functionally, peroxidase that is able to convert a large number of compounds, but its physiological substrate is not known. Shows high reactivity towards anthraquinone dyes (e.g. Reactive Blue 19) and a modest activity towards standard peroxidase substrates (such as guaiacol and 2,6-dimethoxyphenol) and azo dyes (e.g. Reactive Blue 5). Is also able to oxidize aromatic sulfides enantioselectively, resulting in the corresponding (R)-sulfoxides, but with a poor efficiency. Does not display catalase activity. This is Dye-decolorizing peroxidase Tfu_3078 from Thermobifida fusca (strain YX).